Consider the following 98-residue polypeptide: Lipolysis-activating peptide 1-alpha chain (98 aa).

Positions 1-22 are cleaved as a signal peptide; the sequence is MMKLVLFGIIVILFSMIGSIHG. One can recognise an LCN-type CS-alpha/beta domain in the interval 26–89; sequence PGNYPLNTYG…IWDAVKRHCK (64 aa). Cystine bridges form between C40/C63, C49/C68, and C53/C70. A Lysine amide modification is found at K96.

It belongs to the long (3 C-C) scorpion toxin superfamily. Monomer (edited version) and heterodimer (non-edited version) of this alpha chain and a beta chain (AC B8XGZ8). As to expression, expressed by the venom gland.

Its subcellular location is the secreted. Functionally, the heterodimer non-edited LVP1 induces lipolysis in rat adipocytes. Induction of lipolysis by LVP1 appears to be mediated through the beta-2 adrenergic receptor pathway (ADRB2). Its function is as follows. The edited BmKBTx-like, similar to beta-toxins, may modulate voltage-gated sodium channels (Nav) and may block voltage-gated potassium channels (Kv). This chain is Lipolysis-activating peptide 1-alpha chain, found in Buthus israelis (Israeli scorpion).